The following is a 1025-amino-acid chain: Multidrug resistance protein MdtC (1025 aa).

The next 12 helical transmembrane spans lie at 16–36 (LLTLAIALAGILGFRLLPVAP), 333–353 (EVEQSLMIAVALVILVVFVFL), 360–380 (LIPAVAVPVSLIGTFAAMYLC), 387–407 (LSLMALTIATGFVVDDAIVVL), 431–451 (VGFTVLSMSLSLIAVFLPLLM), 459–479 (FFAEFSITLSVAILISLFVSV), 528–548 (WVLLLLLGTVALTVWLFISIP), 853–873 (LWLMLAAIAAVYIVLGILYES), 875–895 (VHPLTILSTLPSAGVGALLAL), 897–917 (LFDTPFSLIALIGILLLIGIV), 953–973 (PILMTTLAALFGALPLVLTSG), and 984–1004 (ITIAGGLIMSQLLTLYTTPVV).

The protein belongs to the resistance-nodulation-cell division (RND) (TC 2.A.6) family. MdtC subfamily. In terms of assembly, part of a tripartite efflux system composed of MdtA, MdtB and MdtC. MdtC forms a heteromultimer with MdtB.

Its subcellular location is the cell inner membrane. This is Multidrug resistance protein MdtC from Pantoea ananatis (strain AJ13355).